A 464-amino-acid polypeptide reads, in one-letter code: MSKLFERDDDIVALATPFLSSALCVIRSSGASSISKFSKIFSNHSALNSAAGNTIHYGYILDNENNCKVDEVVVCLYRAPKSFTGQDAVEVIAHGSVIGIKKIIDLFLKSGFRMAEPGEFTFRSFLAKKIDLTKAEAINEIIFAKTNKAYSLAVNKLSGALFVKIDTIKKCILNFLSAVSVYLDYEVDDREIDIPFDLILNSKVELKKLIDSYKVYEKIDHGITLVLAGSVNAGKSSLFNLFLKKDRSIVSSYPGTTRDYIEASFELDGILFNLFDTAGLRDADNFVERLGIEKSNSLIKEASLVIYVIDISSNLTRDDLLFIDSNKSNSKILFVLNKIDLKINKSTEEFVRSSVLNSSNLIMISIKNLEGIDILYDKIRTLISYERVEIGLDDIIISSSRQIQLLEKAYALILDLLSKIDRQVSYDMLAFDAYEIINCLGEITGEVSSEDVLDNMFKNFCLGK.

Residues R27, E90, and K129 each coordinate (6S)-5-formyl-5,6,7,8-tetrahydrofolate. The TrmE-type G domain occupies 222–384 (GITLVLAGSV…LYDKIRTLIS (163 aa)). GTP-binding positions include 232 to 237 (NAGKSS), 251 to 257 (SSYPGTT), and 276 to 279 (DTAG). Residues S236 and T257 each coordinate Mg(2+). K464 serves as a coordination point for (6S)-5-formyl-5,6,7,8-tetrahydrofolate.

The protein belongs to the TRAFAC class TrmE-Era-EngA-EngB-Septin-like GTPase superfamily. TrmE GTPase family. Homodimer. Heterotetramer of two MnmE and two MnmG subunits. K(+) serves as cofactor.

It is found in the cytoplasm. In terms of biological role, exhibits a very high intrinsic GTPase hydrolysis rate. Involved in the addition of a carboxymethylaminomethyl (cmnm) group at the wobble position (U34) of certain tRNAs, forming tRNA-cmnm(5)s(2)U34. The chain is tRNA modification GTPase MnmE from Borreliella afzelii (strain PKo) (Borrelia afzelii).